The following is a 126-amino-acid chain: Aspartate 1-decarboxylase (126 aa).

The Schiff-base intermediate with substrate; via pyruvic acid role is filled by S25. S25 carries the post-translational modification Pyruvic acid (Ser). T57 is a substrate binding site. Catalysis depends on Y58, which acts as the Proton donor. Substrate is bound at residue 73 to 75; that stretch reads GGA.

Belongs to the PanD family. In terms of assembly, heterooctamer of four alpha and four beta subunits. Pyruvate is required as a cofactor. Post-translationally, is synthesized initially as an inactive proenzyme, which is activated by self-cleavage at a specific serine bond to produce a beta-subunit with a hydroxyl group at its C-terminus and an alpha-subunit with a pyruvoyl group at its N-terminus.

Its subcellular location is the cytoplasm. It carries out the reaction L-aspartate + H(+) = beta-alanine + CO2. It participates in cofactor biosynthesis; (R)-pantothenate biosynthesis; beta-alanine from L-aspartate: step 1/1. Catalyzes the pyruvoyl-dependent decarboxylation of aspartate to produce beta-alanine. This Acinetobacter baumannii (strain ACICU) protein is Aspartate 1-decarboxylase.